Reading from the N-terminus, the 62-residue chain is Large ribosomal subunit protein bL35 (62 aa).

A disordered region spans residues Glu-25–Ile-62. Positions Ser-53–Ile-62 are enriched in basic and acidic residues.

This sequence belongs to the bacterial ribosomal protein bL35 family.

This is Large ribosomal subunit protein bL35 from Mycoplasmopsis fermentans (Mycoplasma fermentans).